The primary structure comprises 118 residues: Small ribosomal subunit protein uS13 (118 aa).

Residues Gly94–Lys118 are disordered.

The protein belongs to the universal ribosomal protein uS13 family. As to quaternary structure, part of the 30S ribosomal subunit. Forms a loose heterodimer with protein S19. Forms two bridges to the 50S subunit in the 70S ribosome.

In terms of biological role, located at the top of the head of the 30S subunit, it contacts several helices of the 16S rRNA. In the 70S ribosome it contacts the 23S rRNA (bridge B1a) and protein L5 of the 50S subunit (bridge B1b), connecting the 2 subunits; these bridges are implicated in subunit movement. Contacts the tRNAs in the A and P-sites. The polypeptide is Small ribosomal subunit protein uS13 (Pasteurella multocida (strain Pm70)).